The primary structure comprises 424 residues: CinA-like protein (424 aa).

Belongs to the CinA family.

The protein is CinA-like protein of Prochlorococcus marinus (strain MIT 9215).